A 92-amino-acid polypeptide reads, in one-letter code: UPF0235 protein CCA_00247 (92 aa).

Belongs to the UPF0235 family.

The protein is UPF0235 protein CCA_00247 of Chlamydia caviae (strain ATCC VR-813 / DSM 19441 / 03DC25 / GPIC) (Chlamydophila caviae).